A 128-amino-acid polypeptide reads, in one-letter code: Virion-associated protein (128 aa).

2 coiled-coil regions span residues M1–K30 and E37–E58. A disordered region spans residues F98 to R128. Residues T119–R128 are compositionally biased toward pro residues. Residues P122–R128 are capsid binding.

The protein belongs to the caulimovirus ORF III family. As to quaternary structure, homotetramer, through coiled-coil domain. Homotrimer when interacts with icosehadral capsid. Interacts with capsid protein, and with Movement protein.

The protein resides in the virion. It localises to the host cell junction. It is found in the host plasmodesma. In terms of biological role, plays a role in virus cell-to-cell and plant-to-plant transmission. Interacts with virion icosahedral capsid and movement protein, thereby facilitating virion cell-to-cell transmission through plasmodesmata opened by viral movement protein. Also interacts with aphid transmission factor, attaching the virion to aphid stylet when the animal feeds on an virus infected plant. Aphid saliva may later detach the virion, inducing release of infectious particles when the animal feeds on a new plant. The sequence is that of Virion-associated protein from Carnation etched ring virus (CERV).